Here is a 65-residue protein sequence, read N- to C-terminus: Weak neurotoxin 7 (65 aa).

5 disulfide bridges follow: Cys-3–Cys-24, Cys-6–Cys-11, Cys-17–Cys-42, Cys-46–Cys-57, and Cys-58–Cys-63.

It belongs to the three-finger toxin family. Ancestral subfamily. Orphan group II sub-subfamily. In terms of tissue distribution, expressed by the venom gland.

The protein localises to the secreted. Its function is as follows. Binds with low affinity to muscular (alpha-1-beta-1-delta-epsilon/CHRNA1-CHRNB1-CHRND-CHRNE) and very low affinity to neuronal (alpha-7/CHRNA7) nicotinic acetylcholine receptor (nAChR). This is Weak neurotoxin 7 from Naja naja (Indian cobra).